The chain runs to 271 residues: Large ribosomal subunit protein uL15c (271 aa).

Disordered stretches follow at residues 1-21 and 66-120; these read MASL…NNYP and SNVS…QKSR. The transit peptide at 1–61 directs the protein to the chloroplast; sequence MASLLSLSST…KESTRLVVVA (61 aa). The span at 66-76 shows a compositional bias: low complexity; sequence SNVSPSIGSGS. Positions 91-101 are enriched in basic residues; sequence SRKKGKRKGRG. Residues 102–114 show a composition bias toward gly residues; it reads HAAGQGGSCGFGM.

As to quaternary structure, component of the chloroplast large ribosomal subunit (LSU). Mature 70S chloroplast ribosomes of higher plants consist of a small (30S) and a large (50S) subunit. The 30S small subunit contains 1 molecule of ribosomal RNA (16S rRNA) and 24 different proteins. The 50S large subunit contains 3 rRNA molecules (23S, 5S and 4.5S rRNA) and 33 different proteins.

The protein resides in the plastid. The protein localises to the chloroplast. Functionally, component of the chloroplast ribosome (chloro-ribosome), a dedicated translation machinery responsible for the synthesis of chloroplast genome-encoded proteins, including proteins of the transcription and translation machinery and components of the photosynthetic apparatus. The polypeptide is Large ribosomal subunit protein uL15c (RPL15) (Spinacia oleracea (Spinach)).